Reading from the N-terminus, the 279-residue chain is Tryptophan 2,3-dioxygenase (279 aa).

Substrate-binding positions include 48–52 (FIIQH), Tyr-110, and Arg-114. His-237 contributes to the heme binding site. Substrate is bound at residue Thr-251.

Belongs to the tryptophan 2,3-dioxygenase family. Homotetramer. It depends on heme as a cofactor.

It catalyses the reaction L-tryptophan + O2 = N-formyl-L-kynurenine. The protein operates within amino-acid degradation; L-tryptophan degradation via kynurenine pathway; L-kynurenine from L-tryptophan: step 1/2. Its function is as follows. Heme-dependent dioxygenase that catalyzes the oxidative cleavage of the L-tryptophan (L-Trp) pyrrole ring and converts L-tryptophan to N-formyl-L-kynurenine. Catalyzes the oxidative cleavage of the indole moiety. The protein is Tryptophan 2,3-dioxygenase of Bradyrhizobium diazoefficiens (strain JCM 10833 / BCRC 13528 / IAM 13628 / NBRC 14792 / USDA 110).